Reading from the N-terminus, the 337-residue chain is MDPESFGLDKTAIEICNSYMPVLDIEPRLIREGFKSLYDIQKKHISKTKQYQLNKENGDSLMDVHFFYPSGYEQNPVDHKYKAIFYIHGGGFMVDGIKKLPREISDRTNSILIYPDYGLTPEFKYPLGLKQCYQLFTDIMNGNFNPFNDLINDSISIVGESSGGNFALSLPLMLKLNNSTFFKKISKVLVYYPITDCNFETPSYNRFSEKFYLTKEGMKWCWNHYTNNDSERDEITCCPLKATIDQLKDFPETLVITAETDVLSSEGEQFGLKLSNANVKVSVLRILKTIHGFVSLDQTNDSIACRVGMDLSMNFLNNISNNSIINENNNKTLLKLL.

The Involved in the stabilization of the negatively charged intermediate by the formation of the oxyanion hole signature appears at 88-90; sequence HGG. Active-site residues include Ser161, Asp261, and His291.

The protein belongs to the 'GDXG' lipolytic enzyme family.

In Dictyostelium discoideum (Social amoeba), this protein is Vegetative-specific protein H5 (cinB).